The primary structure comprises 89 residues: Small ribosomal subunit protein bS20 (89 aa).

The protein belongs to the bacterial ribosomal protein bS20 family.

In terms of biological role, binds directly to 16S ribosomal RNA. This is Small ribosomal subunit protein bS20 from Sulfurovum sp. (strain NBC37-1).